Consider the following 356-residue polypeptide: Uroporphyrinogen decarboxylase (356 aa).

Residues Arg27 to Arg31, Asp77, Tyr154, Thr209, and His327 contribute to the substrate site.

It belongs to the uroporphyrinogen decarboxylase family. Homodimer.

It localises to the cytoplasm. The catalysed reaction is uroporphyrinogen III + 4 H(+) = coproporphyrinogen III + 4 CO2. It participates in porphyrin-containing compound metabolism; protoporphyrin-IX biosynthesis; coproporphyrinogen-III from 5-aminolevulinate: step 4/4. Catalyzes the decarboxylation of four acetate groups of uroporphyrinogen-III to yield coproporphyrinogen-III. The sequence is that of Uroporphyrinogen decarboxylase from Hamiltonella defensa subsp. Acyrthosiphon pisum (strain 5AT).